The sequence spans 235 residues: LexA repressor (235 aa).

Positions 47-67 (IREIADAVGLTSTSSVAHQLR) form a DNA-binding region, H-T-H motif. Active-site for autocatalytic cleavage activity residues include Ser159 and Lys196.

The protein belongs to the peptidase S24 family. As to quaternary structure, homodimer.

The enzyme catalyses Hydrolysis of Ala-|-Gly bond in repressor LexA.. Its function is as follows. Represses a number of genes involved in the response to DNA damage (SOS response), including recA and lexA. In the presence of single-stranded DNA, RecA interacts with LexA causing an autocatalytic cleavage which disrupts the DNA-binding part of LexA, leading to derepression of the SOS regulon and eventually DNA repair. This chain is LexA repressor, found in Mycobacterium leprae (strain Br4923).